We begin with the raw amino-acid sequence, 455 residues long: Ribulose bisphosphate carboxylase large chain (455 aa).

The residue at position 5 (lysine 5) is an N6,N6,N6-trimethyllysine. Residues asparagine 114 and threonine 164 each coordinate substrate. Catalysis depends on lysine 166, which acts as the Proton acceptor. Lysine 168 serves as a coordination point for substrate. The Mg(2+) site is built by lysine 192, aspartate 194, and glutamate 195. An N6-carboxylysine modification is found at lysine 192. Histidine 285 serves as the catalytic Proton acceptor. Substrate contacts are provided by arginine 286, histidine 318, and serine 370.

The protein belongs to the RuBisCO large chain family. Type I subfamily. As to quaternary structure, heterohexadecamer of 8 large chains and 8 small chains; disulfide-linked. The disulfide link is formed within the large subunit homodimers. The cofactor is Mg(2+). Post-translationally, the disulfide bond which can form in the large chain dimeric partners within the hexadecamer appears to be associated with oxidative stress and protein turnover.

It localises to the plastid. The protein localises to the chloroplast. The catalysed reaction is 2 (2R)-3-phosphoglycerate + 2 H(+) = D-ribulose 1,5-bisphosphate + CO2 + H2O. It catalyses the reaction D-ribulose 1,5-bisphosphate + O2 = 2-phosphoglycolate + (2R)-3-phosphoglycerate + 2 H(+). In terms of biological role, ruBisCO catalyzes two reactions: the carboxylation of D-ribulose 1,5-bisphosphate, the primary event in carbon dioxide fixation, as well as the oxidative fragmentation of the pentose substrate in the photorespiration process. Both reactions occur simultaneously and in competition at the same active site. The chain is Ribulose bisphosphate carboxylase large chain from Senna didymobotrya (Popcorn cassia).